Consider the following 431-residue polypeptide: Tol-Pal system protein TolB (431 aa).

The N-terminal stretch at 1 to 26 (MRLMTKLGFRALVASCLIAAGAAANA) is a signal peptide. The interval 411-431 (PQILSVQGGSVREPSWGPFMQ) is disordered.

It belongs to the TolB family. The Tol-Pal system is composed of five core proteins: the inner membrane proteins TolA, TolQ and TolR, the periplasmic protein TolB and the outer membrane protein Pal. They form a network linking the inner and outer membranes and the peptidoglycan layer.

It localises to the periplasm. Its function is as follows. Part of the Tol-Pal system, which plays a role in outer membrane invagination during cell division and is important for maintaining outer membrane integrity. This chain is Tol-Pal system protein TolB, found in Burkholderia ambifaria (strain ATCC BAA-244 / DSM 16087 / CCUG 44356 / LMG 19182 / AMMD) (Burkholderia cepacia (strain AMMD)).